The chain runs to 160 residues: Sec-independent protein translocase protein TatB (160 aa).

The chain crosses the membrane as a helical span at residues 1-21 (MIDLGVSKIALIGAVALIVIG). Disordered regions lie at residues 70 to 100 (ARDVETSIQTSASDFEKSWSDATGSDASTAT) and 133 to 160 (RSGVRTKAQSGAARVARFRPQSGRSSSF). Residues 89-100 (SDATGSDASTAT) show a composition bias toward polar residues.

Belongs to the TatB family. As to quaternary structure, the Tat system comprises two distinct complexes: a TatABC complex, containing multiple copies of TatA, TatB and TatC subunits, and a separate TatA complex, containing only TatA subunits. Substrates initially bind to the TatABC complex, which probably triggers association of the separate TatA complex to form the active translocon.

Its subcellular location is the cell inner membrane. In terms of biological role, part of the twin-arginine translocation (Tat) system that transports large folded proteins containing a characteristic twin-arginine motif in their signal peptide across membranes. Together with TatC, TatB is part of a receptor directly interacting with Tat signal peptides. TatB may form an oligomeric binding site that transiently accommodates folded Tat precursor proteins before their translocation. In Polaromonas sp. (strain JS666 / ATCC BAA-500), this protein is Sec-independent protein translocase protein TatB.